A 311-amino-acid polypeptide reads, in one-letter code: Methionyl-tRNA formyltransferase (311 aa).

110 to 113 (SLLP) is a (6S)-5,6,7,8-tetrahydrofolate binding site.

It belongs to the Fmt family.

The enzyme catalyses L-methionyl-tRNA(fMet) + (6R)-10-formyltetrahydrofolate = N-formyl-L-methionyl-tRNA(fMet) + (6S)-5,6,7,8-tetrahydrofolate + H(+). Attaches a formyl group to the free amino group of methionyl-tRNA(fMet). The formyl group appears to play a dual role in the initiator identity of N-formylmethionyl-tRNA by promoting its recognition by IF2 and preventing the misappropriation of this tRNA by the elongation apparatus. In Streptococcus pyogenes serotype M1, this protein is Methionyl-tRNA formyltransferase.